We begin with the raw amino-acid sequence, 88 residues long: Homeobox protein knotted-1-like 11 (88 aa).

Residues 4–24 (ELKEMLLKKYSGCLSRLRSEF) enclose the ELK domain. Residues 25-88 (LKKRKKGKLP…NQRKRHWKPS (64 aa)) constitute a DNA-binding region (homeobox; TALE-type).

Belongs to the TALE/KNOX homeobox family.

The protein localises to the nucleus. In terms of biological role, probably binds to the DNA sequence 5'-TGAC-3'. This Zea mays (Maize) protein is Homeobox protein knotted-1-like 11 (KNOX11).